The chain runs to 484 residues: Glutamyl-tRNA(Gln) amidotransferase subunit A (484 aa).

Catalysis depends on charge relay system residues K76 and S151. The active-site Acyl-ester intermediate is S175.

The protein belongs to the amidase family. GatA subfamily. As to quaternary structure, heterotrimer of A, B and C subunits.

The enzyme catalyses L-glutamyl-tRNA(Gln) + L-glutamine + ATP + H2O = L-glutaminyl-tRNA(Gln) + L-glutamate + ADP + phosphate + H(+). In terms of biological role, allows the formation of correctly charged Gln-tRNA(Gln) through the transamidation of misacylated Glu-tRNA(Gln) in organisms which lack glutaminyl-tRNA synthetase. The reaction takes place in the presence of glutamine and ATP through an activated gamma-phospho-Glu-tRNA(Gln). The chain is Glutamyl-tRNA(Gln) amidotransferase subunit A from Thioalkalivibrio sulfidiphilus (strain HL-EbGR7).